An 85-amino-acid chain; its full sequence is Large ribosomal subunit protein bL27 (85 aa).

This sequence belongs to the bacterial ribosomal protein bL27 family.

The protein is Large ribosomal subunit protein bL27 of Pseudomonas aeruginosa (strain LESB58).